A 345-amino-acid polypeptide reads, in one-letter code: GTPase Obg (345 aa).

Residues 1-158 enclose the Obg domain; sequence MFIDSVKITL…RLVRLELKLI (158 aa). Positions 159-339 constitute an OBG-type G domain; it reads ADVGLVGFPN…LKFMLLEEIK (181 aa). GTP is bound by residues 165-172, 190-194, 212-215, 280-283, and 320-322; these read GFPNVGKS, FTTLT, DIPG, SKSD, and SSL. Mg(2+)-binding residues include S172 and T192.

This sequence belongs to the TRAFAC class OBG-HflX-like GTPase superfamily. OBG GTPase family. In terms of assembly, monomer. It depends on Mg(2+) as a cofactor.

The protein localises to the cytoplasm. Its function is as follows. An essential GTPase which binds GTP, GDP and possibly (p)ppGpp with moderate affinity, with high nucleotide exchange rates and a fairly low GTP hydrolysis rate. Plays a role in control of the cell cycle, stress response, ribosome biogenesis and in those bacteria that undergo differentiation, in morphogenesis control. This Campylobacter jejuni subsp. jejuni serotype O:6 (strain 81116 / NCTC 11828) protein is GTPase Obg.